Here is a 345-residue protein sequence, read N- to C-terminus: UPF0324 membrane protein RB0971 (345 aa).

10 helical membrane-spanning segments follow: residues 13 to 32 (SLSV…AAVA), 42 to 61 (YGAP…HFLA), 93 to 115 (LLIG…TILF), 130 to 152 (ALLT…AAVL), 161 to 183 (NLIF…YPIV), 193 to 215 (ATGI…GFSV), 228 to 247 (LIRV…VLRS), 262 to 284 (VPGF…VPVL), 291 to 310 (AISR…KTSL), and 320 to 342 (AVAL…MYYL).

The protein belongs to the UPF0324 family.

The protein localises to the cell membrane. This Rhizobium meliloti (strain 1021) (Ensifer meliloti) protein is UPF0324 membrane protein RB0971.